Here is a 760-residue protein sequence, read N- to C-terminus: MTTTTHILGYPRIGEKRELKFAQEKYWRGEIEQTELKQVGATLREKNWATQAEAGLSFATAGDFAWYDHVLTTTLLLGHTPKRHANGFPDLDTLFKVGRGQSQAGCGCSGAAASDMTKWFNTNYHYIVPEFSKDDSFEVSWPQLFEEVNDAIKLGHNVKPVLLGPLSYLYLGKEIEEDFDRLTLLPRLLTAYQAILSKLANQGVEWVQIDEPILSLELEEKWGDAFKLAYQVIRSDVKVLLTTYFDSVSDTLDKIVELPVDGLHIDLSASPEQLDEVVEKLPQGWVLSAGVVNGRNVWRSDLSAQRERLQPVKDKLGDNLWVASSCSLLHSPVDLDLEPALSDEVKSWFAFAKQKVTEVALLGRALDGDHNAILVCDTYSQPIKDRKTAAHVNKPHVQARLNSISASLTERSAPYAERAAHQAEVLGLPLLPTTTIGSFPQTSEIRVQRSAFRSGQLSTDDYHQALKGHIADAVRRQEALDLDVLVHGEAERNDMVEYFAENLAGFQTTKFGWVQSYGSRCVKPAIVVADIEREKPITVEWSTYAQSLTNKQMKGMLTGPVTILCWTFPREDITRKAIADQLALALRDEVSDLQQAGINIIQIDEPAIREGLPLKKRDHKAYLQWAVDAFKIAAASAKPETQIHTHMCYSEFNEIIDSVAALDADVITIETSRSNMELLKAFEDFNYPNEIGPGVYDIHSPNIPSEEWIEELIKKAAEKIPAQRLWVNPDCGLKTRNWSETEAALANLVSAAKKLRAELV.

Residues 17–20 (RELK) and lysine 118 contribute to the 5-methyltetrahydropteroyltri-L-glutamate site. Residues 436-438 (IGS) and glutamate 489 each bind L-homocysteine. L-methionine-binding positions include 436 to 438 (IGS) and glutamate 489. Residues 520–521 (RC) and tryptophan 566 contribute to the 5-methyltetrahydropteroyltri-L-glutamate site. An L-homocysteine-binding site is contributed by aspartate 604. Aspartate 604 is an L-methionine binding site. Glutamate 610 provides a ligand contact to 5-methyltetrahydropteroyltri-L-glutamate. 3 residues coordinate Zn(2+): histidine 646, cysteine 648, and glutamate 670. The Proton donor role is filled by histidine 699. Cysteine 731 is a binding site for Zn(2+).

This sequence belongs to the vitamin-B12 independent methionine synthase family. Requires Zn(2+) as cofactor.

It catalyses the reaction 5-methyltetrahydropteroyltri-L-glutamate + L-homocysteine = tetrahydropteroyltri-L-glutamate + L-methionine. The protein operates within amino-acid biosynthesis; L-methionine biosynthesis via de novo pathway; L-methionine from L-homocysteine (MetE route): step 1/1. Its function is as follows. Catalyzes the transfer of a methyl group from 5-methyltetrahydrofolate to homocysteine resulting in methionine formation. The sequence is that of 5-methyltetrahydropteroyltriglutamate--homocysteine methyltransferase from Vibrio harveyi (Beneckea harveyi).